We begin with the raw amino-acid sequence, 89 residues long: MSCQQNQQQCQPPPKCPAKSPAQCLPPASSSCAPSSGGCGPSSERSCCLSHHRCRRSHRCRCQSSNSCDRGSGQQGGSSSCGHSSAGCC.

Composition is skewed to low complexity over residues Met1–Cys10 and Pro17–Ser46. 2 disordered regions span residues Met1–Ser46 and Cys62–Cys89.

It belongs to the LCE family. In terms of assembly, interacts with CYSRT1; the interaction is direct. In terms of tissue distribution, skin-specific. Expression was readily detected in adult trunk skin, adult arm skin, fetal skin, penal skin, vulva, esophagus and tongue. Not expressed in the cervix, rectum, lung, colon, or placenta.

A structural component of the cornified envelope of the stratum corneum involved in innate cutaneous host defense. Possesses defensin-like antimicrobial activity against a broad spectrum of Gram-positive and Gram-negative bacteria, both aerobic and anaerobic species. Upon inflammation, may regulate skin barrier repair by shaping cutaneous microbiota composition and immune response to bacterial antigens. The sequence is that of Late cornified envelope protein 3A from Homo sapiens (Human).